The chain runs to 2514 residues: Polyprotein P1234 (2514 aa).

The region spanning 28-259 (EPKQVTPNDH…ESRKLLQSWH (232 aa)) is the Alphavirus-like MT domain. A nsP1 membrane-binding region spans residues 244–263 (GSTLYPESRKLLQSWHLPSV). S-palmitoyl cysteine; by host attachment occurs at residues Cys-417 and Cys-419. The region spanning 690–842 (DLTSPPYHEF…HNICTQVYHK (153 aa)) is the (+)RNA virus helicase ATP-binding domain. 721–728 (GVPGSGKS) is a binding site for a ribonucleoside 5'-triphosphate. The (+)RNA virus helicase C-terminal domain maps to 843–991 (SISRRCTLPV…IKEWEAEHAS (149 aa)). A Peptidase C9 domain is found at 1004 to 1327 (DTFQNKANVC…NQLNAVYAGL (324 aa)). The tract at residues 1005–1024 (TFQNKANVCWAKCLVPILDT) is nucleolus localization signal. Catalysis depends on Cys-1013, which acts as the For cysteine protease nsP2 activity. The Nuclear export signal signature appears at 1058–1067 (TRIYGVDLDS). The active-site For cysteine protease nsP2 activity is His-1083. The short motif at 1182 to 1186 (PTKRV) is the Nuclear localization signal element. A Macro domain is found at 1334–1493 (APSYRVKRMD…KITEAISLRS (160 aa)). Residues Asp-1343, Asn-1357, Gly-1365, Gly-1445, Val-1446, and Tyr-1447 each contribute to the ADP-D-ribose site. Residues Cys-1595, Cys-1597, Cys-1620, and Cys-1638 each coordinate Zn(2+). 2 short sequence motifs (FGDF; binding to host G3BP1) span residues 1852-1855 (FGDF) and 1870-1873 (FGDF). The RdRp catalytic domain occupies 2268–2383 (DAVLETDIAS…HGVVSDALMA (116 aa)).

Interacts with non-structural protein 3. Interacts with RNA-directed RNA polymerase nsP4. Interacts with protease nsP2. interacts with itself. As to quaternary structure, interacts with mRNA-capping enzyme nsP1. Interacts with host DDX1. Interacts with host DDX3. Interacts (via C-terminus) with host G3BP1; this interaction inhibits the formation of host stress granules on viral mRNAs and the nsp3-G3BP1 complexes bind viral RNAs and probably orchestrate the assembly of viral replication complexes. Interacts (via C-terminus) with host G3BP2; this interaction inhibits the formation of host stress granules on viral mRNAs and the nsp3-G3BP2 complexes bind viral RNAs and probably orchestrate the assembly of viral replication complexes. In terms of assembly, interacts with mRNA-capping enzyme nsP1. Interacts with protease nsP2. interacts with itself. Interacts with RNA-directed RNA polymerase nsP4. Interacts with mRNA-capping enzyme nsP1. Interacts with KPNA1/karyopherin-alpha1; this interaction probably allows the active transport of protease nsP2 into the host nucleus. Mg(2+) serves as cofactor. It depends on Mn(2+) as a cofactor. Specific enzymatic cleavages in vivo yield mature proteins. The processing of the polyprotein is temporally regulated. In early stages (1.7 hpi), P1234 is first cleaved in trans through its nsP2 protease activity, releasing P123 and nsP4, which associate to form the early replication complex. At the same time, P1234 is also cut at the nsP1/nsP2 site early in infection but with lower efficiency. After replication of the viral minus-strand RNAs (4 hpi), the polyproteins are cut at the nsP1/nsP2 and nsP2/nsP3 sites very efficiently, preventing accumulation of P123 and P1234 and allowing the formation of the late replication complex. NsP3/nsP4 site is not cleaved anymore and P34 is produced rather than nsP4. In terms of processing, specific enzymatic cleavages in vivo yield mature proteins. The processing of the polyprotein is temporally regulated. In early stages (1.7 hpi), P123 is cleaved at the nsP1/nsP2 site with low efficiency. After replication of the viral minus-strand RNAs (4 hpi), the polyproteins are cut at the nsP1/nsP2 and nsP2/nsP3 sites very efficiently, preventing accumulation of P123 and allowing the formation of the late replication complex. Post-translationally, palmitoylated by host palmitoyltransferases ZDHHC2 and ZDHHC19. Phosphorylated by host on serines and threonines. In terms of processing, ubiquitinated; targets the protein for rapid degradation via the ubiquitin system. Nsp4 is present in extremely low quantities due to low frequency of translation through the amber stop-codon and the degradation by the ubiquitin pathway.

It is found in the host cytoplasmic vesicle membrane. The protein resides in the host cell membrane. Its subcellular location is the host cell projection. The protein localises to the host filopodium. It localises to the host nucleus. It is found in the host cytoplasm. The catalysed reaction is GTP + S-adenosyl-L-methionine = N(7)-methyl-GTP + S-adenosyl-L-homocysteine. It carries out the reaction N(7)-methyl-GTP + L-histidyl-[protein] = N(tele)-(N(7)-methylguanosine 5'-phospho)-L-histidyl-[protein] + diphosphate. The enzyme catalyses N(tele)-(N(7)-methylguanosine 5'-phospho)-L-histidyl-[protein] + a 5'-end diphospho-(purine-ribonucleoside) in mRNA + H(+) = a 5'-end (N(7)-methyl 5'-triphosphoguanosine)-(purine-ribonucleoside) in mRNA + L-histidyl-[protein]. It catalyses the reaction a 5'-end triphospho-ribonucleoside in mRNA + H2O = a 5'-end diphospho-ribonucleoside in mRNA + phosphate + H(+). The catalysed reaction is a ribonucleoside 5'-triphosphate + H2O = a ribonucleoside 5'-diphosphate + phosphate + H(+). It carries out the reaction ATP + H2O = ADP + phosphate + H(+). The enzyme catalyses RNA(n) + a ribonucleoside 5'-triphosphate = RNA(n+1) + diphosphate. It catalyses the reaction 4-O-(ADP-D-ribosyl)-L-aspartyl-[protein] + H2O = L-aspartyl-[protein] + ADP-D-ribose + H(+). The catalysed reaction is 5-O-(ADP-D-ribosyl)-L-glutamyl-[protein] + H2O = L-glutamyl-[protein] + ADP-D-ribose + H(+). It carries out the reaction RNA(n) + ATP = RNA(n)-3'-adenine ribonucleotide + diphosphate. The enzyme catalyses ADP-alpha-D-ribose 1''-phosphate + H2O = ADP-D-ribose + phosphate. Functionally, inactive precursor of the viral replicase, which is activated by cleavages carried out by the viral protease nsP2. The early replication complex formed by the polyprotein P123 and nsP4 synthesizes minus-strand RNAs. As soon P123 is cleaved into mature proteins, the plus-strand RNAs synthesis begins. In terms of biological role, cytoplasmic capping enzyme that catalyzes two virus-specific reactions: methyltransferase and nsP1 guanylyltransferase. mRNA-capping is necessary since all viral RNAs are synthesized in the cytoplasm, and host capping enzymes are restricted to the nucleus. The enzymatic reaction involves a covalent link between 7-methyl-GMP and nsP1, whereas eukaryotic capping enzymes form a covalent complex only with GMP. nsP1 capping consists in the following reactions: GTP is first methylated into 7-methyl-GMP and then is covalently linked to nsP1 to form the m7GMp-nsP1 complex from which 7-methyl-GMP complex is transferred to the mRNA to create the cap structure. NsP1 is also needed for the initiation of the minus-strand RNAs synthesis. Probably serves as a membrane anchor for the replication complex composed of nsP1-nsP4. Palmitoylated nsP1 is remodeling host cell cytoskeleton, and induces filopodium-like structure formation at the surface of the host cell. Its function is as follows. Multifunctional protein whose N-terminus is part of the RNA polymerase complex and displays NTPase, RNA triphosphatase and helicase activities. NTPase and RNA triphosphatase are involved in viral RNA capping and helicase keeps a check on the dsRNA replication intermediates. The C-terminus harbors a protease that specifically cleaves the polyproteins and releases the mature proteins. Required for the shutoff of minus-strand RNAs synthesis. Specifically inhibits the host IFN response by promoting the nuclear export of host STAT1. Also inhibits host transcription by inducing the rapid proteasome-dependent degradation of POLR2A, a catalytic subunit of the RNAPII complex. The resulting inhibition of cellular protein synthesis serves to ensure maximal viral gene expression and to evade host immune response. Functionally, seems to be essential for minus-strand RNAs and subgenomic 26S mRNAs synthesis. Displays mono-ADP-ribosylhydrolase activity. ADP-ribosylation is a post-translational modification that controls various processes of the host cell and the virus probably needs to revert it for optimal viral replication. Binds proteins of G3BP family and sequesters them into the viral RNA replication complexes thereby inhibiting the formation of host stress granules on viral mRNAs. The nsp3-G3BP complexes bind viral RNAs and probably orchestrate the assembly of viral replication complexes, thanks to the ability of G3BP family members to self-assemble and bind DNA. RNA dependent RNA polymerase. Replicates genomic and antigenomic RNA by recognizing replications specific signals. The early replication complex formed by the polyprotein P123 and nsP4 synthesizes minus-strand RNAs. The late replication complex composed of fully processed nsP1-nsP4 is responsible for the production of genomic and subgenomic plus-strand RNAs. The chain is Polyprotein P1234 from O'nyong-nyong virus (strain Gulu) (ONNV).